Here is an 88-residue protein sequence, read N- to C-terminus: ATP synthase subunit c 1 (88 aa).

The next 2 helical transmembrane spans lie at 4–24 (FTWV…GTAI) and 53–73 (IGLA…MIIL).

This sequence belongs to the ATPase C chain family. In terms of assembly, F-type ATPases have 2 components, F(1) - the catalytic core - and F(0) - the membrane proton channel. F(1) has five subunits: alpha(3), beta(3), gamma(1), delta(1), epsilon(1). F(0) has three main subunits: a(1), b(2) and c(10-14). The alpha and beta chains form an alternating ring which encloses part of the gamma chain. F(1) is attached to F(0) by a central stalk formed by the gamma and epsilon chains, while a peripheral stalk is formed by the delta and b chains.

The protein localises to the cell inner membrane. F(1)F(0) ATP synthase produces ATP from ADP in the presence of a proton or sodium gradient. F-type ATPases consist of two structural domains, F(1) containing the extramembraneous catalytic core and F(0) containing the membrane proton channel, linked together by a central stalk and a peripheral stalk. During catalysis, ATP synthesis in the catalytic domain of F(1) is coupled via a rotary mechanism of the central stalk subunits to proton translocation. Its function is as follows. Key component of the F(0) channel; it plays a direct role in translocation across the membrane. A homomeric c-ring of between 10-14 subunits forms the central stalk rotor element with the F(1) delta and epsilon subunits. The sequence is that of ATP synthase subunit c 1 from Syntrophotalea carbinolica (strain DSM 2380 / NBRC 103641 / GraBd1) (Pelobacter carbinolicus).